The primary structure comprises 40 residues: Cytochrome c3 hydrogenase small chain (40 aa).

It depends on Fe cation as a cofactor.

The catalysed reaction is 2 Fe(III)-[cytochrome c3] + H2 = 2 Fe(II)-[cytochrome c3] + 2 H(+). In Acidithiobacillus ferrooxidans (Thiobacillus ferrooxidans), this protein is Cytochrome c3 hydrogenase small chain (hoxK).